Reading from the N-terminus, the 438-residue chain is Malic acid transport protein (438 aa).

10 helical membrane passes run 37–57 (SWFA…SFPF), 65–85 (IGKI…SCML), 106–126 (LFIA…AIYA), 140–160 (ILYY…FFTI), 172–192 (SPAW…AGAV), 205–225 (VIFG…LFAV), 242–262 (PGMF…INIA), 288–308 (FMAI…MVSF), 321–341 (ACGW…TIEI), and 353–373 (FGHI…YLMV). The disordered stretch occupies residues 390–438 (AHPPPKPNTGVLNPTFPPEKAPASLEKVDTHVTSTGGESDPPSSEHESV). Ser413, Ser423, Ser428, Ser432, Ser433, and Ser437 each carry phosphoserine.

The protein belongs to the tellurite-resistance/dicarboxylate transporter (TDT) family.

It is found in the membrane. Permease for malate and other C4 dicarboxylic acids. This is Malic acid transport protein (mae1) from Schizosaccharomyces pombe (strain 972 / ATCC 24843) (Fission yeast).